We begin with the raw amino-acid sequence, 649 residues long: Glycerol-3-phosphate dehydrogenase, mitochondrial (649 aa).

Asp-69 to Glu-97 is a binding site for FAD.

Belongs to the FAD-dependent glycerol-3-phosphate dehydrogenase family. Requires FAD as cofactor.

The protein resides in the mitochondrion inner membrane. The protein localises to the mitochondrion intermembrane space. It catalyses the reaction a quinone + sn-glycerol 3-phosphate = dihydroxyacetone phosphate + a quinol. The protein operates within polyol metabolism; glycerol degradation via glycerol kinase pathway; glycerone phosphate from sn-glycerol 3-phosphate (anaerobic route): step 1/1. This Saccharomyces cerevisiae (strain ATCC 204508 / S288c) (Baker's yeast) protein is Glycerol-3-phosphate dehydrogenase, mitochondrial (GUT2).